Here is a 1756-residue protein sequence, read N- to C-terminus: Multifunctional conjugation protein TraI (1756 aa).

Residues 1 to 330 (MMSIAQVRSA…TQAIAGLSER (330 aa)) are DNA relaxase. Tyr-16 serves as the catalytic O-(5'-phospho-DNA)-tyrosine intermediate; for relaxase activity. Tyr-17 functions as the Relaxase in the catalytic mechanism. Mg(2+) is bound by residues His-146, His-157, and His-159. Residues 950–1500 (GKEAVMPLME…LRDVAAGRAV (551 aa)) form a DNA helicase I region. 992 to 999 (GYAGVGKT) is an ATP binding site. The tract at residues 1534 to 1756 (RNGKSAGIWL…LQKEKTLGGD (223 aa)) is required for DNA transfer, may interact with TraM. A coiled-coil region spans residues 1717-1753 (QRVREAVREIARENLLQERLQQMERDMVRDLQKEKTL).

It to TraI of plasmid IncFII R100. Monomer. Part of the relaxosome, a complex composed of plasmid-encodes TraI, TraM, TraY and host-encoded IHF bound to the F plasmid origin of transfer (oriT). Directly contacts coupling protein TraD. Seems to directly contact TraM via its C-terminus. It depends on Mg(2+) as a cofactor.

It is found in the cytoplasm. The catalysed reaction is ATP-independent breakage of single-stranded DNA, followed by passage and rejoining.. It catalyses the reaction ATP + H2O = ADP + phosphate + H(+). Nicking activity (relaxase) is inhibited by bisphosphonates such as the non-competitive inhibitor imidobisphosphate (PNP), etidronic acid (ETIDRO) and clodronic acid (CLODRO). The latter 2 are competitive inhibitors, and are already used clinically to treat bone loss (marketed as Didronel and Bonefos). All 3 compounds also inhibit conjugation and kill F plasmid-containing cells. They are specific to dual tyrosine relaxases such as those found in F and related R conjugative plasmids. Its function is as follows. Conjugative DNA transfer (CDT) is the unidirectional transfer of ssDNA plasmid from a donor to a recipient cell. It is the central mechanism by which antibiotic resistance and virulence factors are propagated in bacterial populations. Part of the relaxosome, which facilitates a site- and strand-specific cut in the origin of transfer by TraI, at the nic site. Relaxosome formation requires binding of IHF and TraY to the oriT region, which then facilitates binding of TraI relaxase. TraI forms a covalent 5'-phosphotyrosine intermediate linkage to the ssDNA. The transesterified T-strand moves from the donor cell to the recipient cell in a 5'to 3' direction, with the DNA helicase activity of TraI unwinding the DNA. DNA transfer occurs via the conjugative pore (transferosome) an intercellular junction mediated by a type IV secretion system, with TraD providing the means to link the relaxosome to the conjugative pore. The relaxase completes DNA transfer by reversing the covalent phosphotyrosine linkage and releasing the T-strand. Functionally, traI has also been identified as DNA helicase I. DNA. helicase I is a potent, highly processive DNA-dependent ATPase, able to unwind about 1.1 kb dsDNA per second in a 5' to 3' manner. This Escherichia coli (strain K12) protein is Multifunctional conjugation protein TraI (traI).